The primary structure comprises 49 residues: Large ribosomal subunit protein bL33B (49 aa).

The protein belongs to the bacterial ribosomal protein bL33 family.

The protein is Large ribosomal subunit protein bL33B (rpmG2) of Staphylococcus epidermidis (strain ATCC 12228 / FDA PCI 1200).